Reading from the N-terminus, the 301-residue chain is Probable 2-oxoglutarate-dependent dioxygenase AOP1 (301 aa).

The region spanning 158 to 262 (TYYLTRLMKY…RYSTGLFSIP (105 aa)) is the Fe2OG dioxygenase domain. His-186, Asp-188, and His-243 together coordinate Fe cation. Arg-253 lines the 2-oxoglutarate pocket.

This sequence belongs to the iron/ascorbate-dependent oxidoreductase family. Fe(2+) is required as a cofactor.

In terms of biological role, probable 2-oxoglutarate-dependent dioxygenase that may be involved in glucosinolates biosynthesis. May play a role in the production of aliphatic glucosinolates. The polypeptide is Probable 2-oxoglutarate-dependent dioxygenase AOP1 (AOP1) (Arabidopsis thaliana (Mouse-ear cress)).